The primary structure comprises 644 residues: Exoribonuclease 2 (644 aa).

The region spanning 189 to 516 (REDLTALDFV…NHRLLKAVIK (328 aa)) is the RNB domain. Positions 561–643 (DTRFAAEIVD…ETRSIIARPV (83 aa)) constitute an S1 motif domain.

The protein belongs to the RNR ribonuclease family. RNase II subfamily.

It localises to the cytoplasm. It carries out the reaction Exonucleolytic cleavage in the 3'- to 5'-direction to yield nucleoside 5'-phosphates.. Its function is as follows. Involved in mRNA degradation. Hydrolyzes single-stranded polyribonucleotides processively in the 3' to 5' direction. This is Exoribonuclease 2 from Escherichia coli O8 (strain IAI1).